The following is a 316-amino-acid chain: D-alanine--D-alanine ligase (316 aa).

Positions Lys129–Pro316 constitute an ATP-grasp domain. Glu162–Glu217 is a binding site for ATP. Mg(2+) contacts are provided by Asp288, Glu301, and Asn303.

This sequence belongs to the D-alanine--D-alanine ligase family. It depends on Mg(2+) as a cofactor. Requires Mn(2+) as cofactor.

The protein resides in the cytoplasm. It carries out the reaction 2 D-alanine + ATP = D-alanyl-D-alanine + ADP + phosphate + H(+). It functions in the pathway cell wall biogenesis; peptidoglycan biosynthesis. Its function is as follows. Cell wall formation. In Enterococcus gallinarum, this protein is D-alanine--D-alanine ligase (ddl).